Here is a 384-residue protein sequence, read N- to C-terminus: MNSSQKRVLHVLSGMNRGGAETMVMNLYRKMDKSKVQFDFLTYRNDPCAYDEEILSLGGRLFYVPSIGQSNPLTFVRNVRNAIKENGPFSAVHAHTDFQTGFIALAARLAGVPVRVCHSHNTSWKTGFNWKDRLQLLVFRRLILANATALCACGEDAGRFLFGQSNMERERVHLLPNGIDLELFAPNGQAADEEKAARGIAADRLIIGHVARFHEVKNHAFLLKLAAHLKERGIRFQLVLAGDGPLCGEIEEEARQQNLLSDVLFLGTEERIHELMRTFDVFVMPSLYEGLPVVLVEAQASGLPCIISDSITEKVDAGLGLVTRLSLSEPISVWAETIARAAAAGRPKREFIKETLAQLGYDAQQNVGALLNVYNISTEKDHNR.

The protein belongs to the glycosyltransferase group 1 family. Glycosyltransferase 4 subfamily.

In terms of biological role, may be involved in the production of the exopolysaccharide (EPS) component of the extracellular matrix during biofilm formation. EPS is responsible for the adhesion of chains of cells into bundles. Required for biofilm maintenance. This chain is Putative glycosyltransferase EpsF (epsF), found in Bacillus subtilis (strain 168).